Here is a 313-residue protein sequence, read N- to C-terminus: MKRTGILLVNLGTPKDSSKTEVRKYLKTFLSDRRVIKIHPIIWKPILNGIILNIRPKKSAKLYQKICTENGFPLLEYTEKQMENLKNICPEVEVTIGMSYSEPSIETALDTLLSKEIEELNVIPMYPQYSGTTVGSVFDSVMNYFIKSDRIVDIKFIRSFYNNPQYIDYFSKKINEALNESPIDAIVFSYHGIPMSYVKDGDNYPKECTKTTKLIMDKLGDIRYYQTYQSKFGPSEWLKPATDDTLKKLPSKGIKNILIVAPGFVVDCLETIEELEHENRNYFLENGGEVYKYVHPFNGDIEFAKLVKDIISL.

Fe(2+) contacts are provided by His191 and Glu270.

The protein belongs to the ferrochelatase family.

It is found in the cytoplasm. It carries out the reaction Fe-coproporphyrin III + 2 H(+) = coproporphyrin III + Fe(2+). It participates in porphyrin-containing compound metabolism; protoheme biosynthesis. Involved in coproporphyrin-dependent heme b biosynthesis. Catalyzes the insertion of ferrous iron into coproporphyrin III to form Fe-coproporphyrin III. The polypeptide is Coproporphyrin III ferrochelatase (Enterococcus faecalis (strain ATCC 700802 / V583)).